Consider the following 687-residue polypeptide: Pre-mRNA-splicing factor CLF1 (687 aa).

HAT repeat units lie at residues 45 to 77 (EYQR…FEIE), 79 to 111 (HDMR…AELK), 113 to 145 (KCIN…VEES), 147 to 178 (NNVE…FEIR), 180 to 211 (KNWN…FENR), 213 to 247 (GNTE…AKLV), 251 to 283 (AHWE…LKAG), 300 to 332 (TISY…LISE), 337 to 369 (QIMQ…LWMR), 383 to 416 (LEEE…FLIR), 451 to 483 (KEFD…LEEN), 525 to 557 (QEFE…YQTS), and 629 to 661 (LDQE…YIFP).

The protein belongs to the crooked-neck family. Belongs to the NTC complex (or PRP19-associated complex), composed of at least CEF1, CLF1, ISY1, NTC20, SNT309, SYF1, SYF2, and PRP19. The NTC complex associates with the spliceosome after the release of the U1 and U4 snRNAs and forms the CWC spliceosome subcomplex (or CEF1-associated complex) reminiscent of a late-stage spliceosome composed also of the U2, U5 and U6 snRNAs and at least BUD13, BUD31, BRR2, CDC40, CUS1, CWC2, CWC15, CWC21, CWC22, CWC23, CWC24, CWC25, CWC27, ECM2, HSH155, IST3, LEA1, MSL1, PRP8, PRP9, PRP11, PRP21, PRP22, PRP45, PRP46, SLU7, SMB1, SMD1, SMD2, SMD3, SMX2, SMX3, SNU114, SPP2, RSE1 and YJU2. Interacts with CEF1, ISY1, MUD2, NTC20, PRP22, PRP40, PRP46, SYF1, SYF2, and the ORC2 subunit of the origin recognition complex.

It is found in the nucleus. In terms of biological role, involved in pre-mRNA splicing and cell cycle progression. Required for the spliceosome assembly by promoting the functional integration of the U4/U6.U5 tri-snRNP particle into the U1-, U2-dependent pre-spliceosome. Also recruits PRP19 to the spliceosome, as a component of the NTC complex (or PRP19-associated complex). The association of the NTC complex to the spliceosome mediates conformational rearrangement or stabilizes the structure of the spliceosome after U4 snRNA dissociation, which leads to spliceosome maturation. Required for initiation of the DNA replication by binding the RNA replication origins, probably through its interaction with the origin recognition complex (ORC). The sequence is that of Pre-mRNA-splicing factor CLF1 (CLF1) from Saccharomyces cerevisiae (strain ATCC 204508 / S288c) (Baker's yeast).